A 263-amino-acid polypeptide reads, in one-letter code: Endonuclease 8 (263 aa).

Catalysis depends on P2, which acts as the Schiff-base intermediate with DNA. Catalysis depends on E3, which acts as the Proton donor. Catalysis depends on K53, which acts as the Proton donor; for beta-elimination activity. Positions 70, 125, and 169 each coordinate DNA. An FPG-type zinc finger spans residues 229 to 263; it reads KVFHRDGEPCERCGSIIEKTTLSSRPFYWCPGCQH. Catalysis depends on R253, which acts as the Proton donor; for delta-elimination activity.

The protein belongs to the FPG family. Requires Zn(2+) as cofactor.

The enzyme catalyses 2'-deoxyribonucleotide-(2'-deoxyribose 5'-phosphate)-2'-deoxyribonucleotide-DNA = a 3'-end 2'-deoxyribonucleotide-(2,3-dehydro-2,3-deoxyribose 5'-phosphate)-DNA + a 5'-end 5'-phospho-2'-deoxyribonucleoside-DNA + H(+). Functionally, involved in base excision repair of DNA damaged by oxidation or by mutagenic agents. Acts as a DNA glycosylase that recognizes and removes damaged bases. Has a preference for oxidized pyrimidines, such as thymine glycol, 5,6-dihydrouracil and 5,6-dihydrothymine. Has AP (apurinic/apyrimidinic) lyase activity and introduces nicks in the DNA strand. Cleaves the DNA backbone by beta-delta elimination to generate a single-strand break at the site of the removed base with both 3'- and 5'-phosphates. The chain is Endonuclease 8 from Escherichia coli O17:K52:H18 (strain UMN026 / ExPEC).